The following is an 842-amino-acid chain: MVTVGNYCETEGPAGPAWTQNGLSPCFFFTLVPSTLLTLGVLALVLVLPRRRREVPAGPEELSWAAGPRVAPYVLQLFLATLQMALPLAGLAGRVGTARGVRLPGYLLLASVLESLASVCGLWLLVVERSQARQSLAMGVWMKFRHSLGLLLLWTVTFAAENLALVSWNSPQWWWARADLGQQVQFGLWVLRYVTSGGLFILGLWAPGLRPQSYTLHVHEEDQDVGGNQGRSTDRRSTWRDLGRKLRLLSSYLWPRGSPSLQLIVLICLGLMGLERALNVLVPIFYRDIVNLLTAKAPWSSLAWTVTTYVFLKFLQGGGTGSTGFVSNLRTFLWIRVQQFTSRGVELRLFSHLHELSLRWHLGRRTGEVLRIVDRGTSSVTGLLSYLVFSIIPTLADIIIGIIYFSMFFNAWFGLIVFLCMSLYLILTIVVTEWRAKFRRDMNTQENATRARAVDSLLNFETVKYYGAEGYEVDRYREAILKFQGLEWKSTASLVVLNQTQNLVIGLGLLAGSLLCAYFVSEQKLQVGDFVLFGTYITQLYMPLNWFGTYYRMIQTNFIDMENMFDLLKEETEVKDVPGAGPLRFHKGRIEFENVHFSYADGQETLQDVSFTVMPGQTVALVGPSGAGKSTILRLLFRFYDISSGCIRIDGQDISQVTQISLRSHIGVVPQDTVLFNDTIANNIRYGRVTAGDSEVEAAAQAAGIHDAILSFPEGYETQVGERGLKLSGGEKQRVAIARTILKAPDIILLDEATSALDTSNERAIQASLAKVCTNRTTIVIAHRLSTVVNADQILVIKDGCIIERGRHEALLSRGGVYAEMWQLQQQGQETVPEESKPQDTA.

The Lumenal portion of the chain corresponds to 1–26 (MVTVGNYCETEGPAGPAWTQNGLSPC). Positions 1-205 (MVTVGNYCET…SGGLFILGLW (205 aa)) are required for the lysosomal targeting. The interval 1-236 (MVTVGNYCET…GNQGRSTDRR (236 aa)) is required for ATPase activity. Cys8 and Cys26 form a disulfide bridge. Residues 27–47 (FFFTLVPSTLLTLGVLALVLV) form a helical membrane-spanning segment. At 48 to 72 (LPRRRREVPAGPEELSWAAGPRVAP) the chain is on the cytoplasmic side. A helical transmembrane segment spans residues 73–93 (YVLQLFLATLQMALPLAGLAG). Residues 94 to 106 (RVGTARGVRLPGY) lie on the Lumenal side of the membrane. The chain crosses the membrane as a helical span at residues 107–127 (LLLASVLESLASVCGLWLLVV). The Cytoplasmic segment spans residues 128–147 (ERSQARQSLAMGVWMKFRHS). Residues 148-168 (LGLLLLWTVTFAAENLALVSW) form a helical membrane-spanning segment. The Lumenal segment spans residues 169-185 (NSPQWWWARADLGQQVQ). A helical transmembrane segment spans residues 186 to 206 (FGLWVLRYVTSGGLFILGLWA). The Cytoplasmic portion of the chain corresponds to 207 to 263 (PGLRPQSYTLHVHEEDQDVGGNQGRSTDRRSTWRDLGRKLRLLSSYLWPRGSPSLQL). The chain crosses the membrane as a helical span at residues 264–284 (IVLICLGLMGLERALNVLVPI). One can recognise an ABC transmembrane type-1 domain in the interval 265–556 (VLICLGLMGL…FGTYYRMIQT (292 aa)). Residues 285–291 (FYRDIVN) are Lumenal-facing. A helical transmembrane segment spans residues 292–312 (LLTAKAPWSSLAWTVTTYVFL). The Cytoplasmic segment spans residues 313 to 375 (KFLQGGGTGS…TGEVLRIVDR (63 aa)). The chain crosses the membrane as a helical span at residues 376–396 (GTSSVTGLLSYLVFSIIPTLA). Asp397 is a topological domain (lumenal). The helical transmembrane segment at 398-418 (IIIGIIYFSMFFNAWFGLIVF) threads the bilayer. The Cytoplasmic segment spans residues 419-499 (LCMSLYLILT…STASLVVLNQ (81 aa)). Residues 500 to 520 (TQNLVIGLGLLAGSLLCAYFV) form a helical membrane-spanning segment. Residues 521–529 (SEQKLQVGD) are Lumenal-facing. The chain crosses the membrane as a helical span at residues 530-550 (FVLFGTYITQLYMPLNWFGTY). Over 551–842 (YRMIQTNFID…PEESKPQDTA (292 aa)) the chain is Cytoplasmic. The ABC transporter domain maps to 590–824 (IEFENVHFSY…GGVYAEMWQL (235 aa)). ATP contacts are provided by residues Tyr599 and 623-634 (GPSGAGKSTILR).

This sequence belongs to the ABC transporter superfamily. ABCB family. Heavy Metal importer (TC 3.A.1.210) subfamily. As to quaternary structure, homodimer. Post-translationally, N-glycosylated.

It is found in the cell membrane. Its subcellular location is the mitochondrion outer membrane. The protein localises to the endoplasmic reticulum membrane. The protein resides in the golgi apparatus membrane. It localises to the endosome membrane. It is found in the lysosome membrane. Its subcellular location is the late endosome membrane. The protein localises to the early endosome membrane. The protein resides in the secreted. It localises to the extracellular exosome. It is found in the mitochondrion. Its subcellular location is the endosome. The protein localises to the multivesicular body membrane. The protein resides in the melanosome membrane. It carries out the reaction coproporphyrin III(in) + ATP + H2O = coproporphyrin III(out) + ADP + phosphate + H(+). The enzyme catalyses coproporphyrinogen III(in) + ATP + H2O = coproporphyrinogen III(out) + ADP + phosphate + H(+). It catalyses the reaction heme b(in) + ATP + H2O = heme b(out) + ADP + phosphate + H(+). The catalysed reaction is pheophorbide a(in) + ATP + H2O = pheophorbide a(out) + ADP + phosphate + H(+). It carries out the reaction protoporphyrin IX(in) + ATP + H2O = protoporphyrin IX(out) + ADP + phosphate + H(+). The enzyme catalyses coproporphyrin I(in) + ATP + H2O = coproporphyrin I(out) + ADP + phosphate + H(+). It catalyses the reaction uroporphyrin I(in) + ATP + H2O = uroporphyrin I(out) + ADP + phosphate + H(+). The catalysed reaction is uroporphyrin III(in) + ATP + H2O = uroporphyrin III(out) + ADP + phosphate + H(+). In terms of biological role, ATP-dependent transporter that catalyzes the transport of a broad-spectrum of porphyrins from the cytoplasm to the extracellular space through the plasma membrane or into the vesicle lumen. May also function as an ATP-dependent importer of porphyrins from the cytoplasm into the mitochondria, in turn may participate in the de novo heme biosynthesis regulation and in the coordination of heme and iron homeostasis during phenylhydrazine stress. May play a key role in the early steps of melanogenesis producing PMEL amyloid fibrils. In vitro, it confers to cells a resistance to toxic metal such as arsenic and cadmium and against chemotherapeutics agent such as 5-fluorouracil, SN-38 and vincristin. In addition may play a role in the transition metal homeostasis. This chain is ATP-binding cassette sub-family B member 6, found in Mus musculus (Mouse).